Consider the following 197-residue polypeptide: Recombination protein RecR (197 aa).

Residues cysteine 56 to cysteine 71 form a C4-type zinc finger. One can recognise a Toprim domain in the interval serine 79–proline 174.

It belongs to the RecR family.

In terms of biological role, may play a role in DNA repair. It seems to be involved in an RecBC-independent recombinational process of DNA repair. It may act with RecF and RecO. This chain is Recombination protein RecR, found in Paramagnetospirillum magneticum (strain ATCC 700264 / AMB-1) (Magnetospirillum magneticum).